Reading from the N-terminus, the 225-residue chain is Pathogenesis-related thaumatin-like protein 3.8 (225 aa).

The first 26 residues, Met-1 to Ala-26, serve as a signal peptide directing secretion. 8 disulfides stabilise this stretch: Cys-35–Cys-224, Cys-76–Cys-86, Cys-91–Cys-97, Cys-139–Cys-213, Cys-144–Cys-197, Cys-152–Cys-162, Cys-166–Cys-175, and Cys-176–Cys-184. Asn-188 carries an N-linked (GlcNAc...) asparagine glycan.

The protein belongs to the thaumatin family.

Its function is as follows. May be involved in disease resistance. The polypeptide is Pathogenesis-related thaumatin-like protein 3.8 (Cryptomeria japonica (Japanese cedar)).